A 391-amino-acid chain; its full sequence is MNAAPITQDLLTIPRKLPETAGRNLVGLTREQLHEALIQAGTPERQARMRVGQIWQWIYHWGVRDFAQMTNLAKDYRALLAENFEIALPEIVTRQISADGTRKYLLRISGGHEVETVYIPEENRGTLCISSQVGCTLTCSFCHTGTQKLVRNLTAGEIVGQVMVARDDLGEWPKPGAPKDETRLVSNVVLMGMGEPLYNFDNVRDAMKVVMDGEGISLSRRRITLSTSGIVPEIAKTAEEIGCLLAVSFHATTDETRDKLVPVNRKWNIETLLNALREYPRLSNSERITFEYVMLDGVNDSDEDARRLVRLIRGIPAKVNLIPFNEWPGSPYRRSGWERIEAFADIVHKAGYASPIRTPRGEDIMAACGQLKSATERGRKTAAQIAAEARA.

E115 serves as the catalytic Proton acceptor. The Radical SAM core domain occupies E121–D363. C128 and C368 are joined by a disulfide. [4Fe-4S] cluster contacts are provided by C135, C139, and C142. S-adenosyl-L-methionine contacts are provided by residues G194 to E195, S226, S248 to H250, and N325. C368 (S-methylcysteine intermediate) is an active-site residue.

Belongs to the radical SAM superfamily. RlmN family. [4Fe-4S] cluster serves as cofactor.

It localises to the cytoplasm. The enzyme catalyses adenosine(2503) in 23S rRNA + 2 reduced [2Fe-2S]-[ferredoxin] + 2 S-adenosyl-L-methionine = 2-methyladenosine(2503) in 23S rRNA + 5'-deoxyadenosine + L-methionine + 2 oxidized [2Fe-2S]-[ferredoxin] + S-adenosyl-L-homocysteine. It carries out the reaction adenosine(37) in tRNA + 2 reduced [2Fe-2S]-[ferredoxin] + 2 S-adenosyl-L-methionine = 2-methyladenosine(37) in tRNA + 5'-deoxyadenosine + L-methionine + 2 oxidized [2Fe-2S]-[ferredoxin] + S-adenosyl-L-homocysteine. Specifically methylates position 2 of adenine 2503 in 23S rRNA and position 2 of adenine 37 in tRNAs. m2A2503 modification seems to play a crucial role in the proofreading step occurring at the peptidyl transferase center and thus would serve to optimize ribosomal fidelity. This is Dual-specificity RNA methyltransferase RlmN from Paracoccus denitrificans (strain Pd 1222).